Here is a 277-residue protein sequence, read N- to C-terminus: MNTRSYSTFTPGTRDKSLSSFDGKVKSHPQKKLTSGQHRCGKGRNNSGIITIRHRGGGHKRLYRQIDFRRSEKNNILGKIVTIESDPNRSAYICLVHYRDGQKTYILHPRGIMIGDTILSGPRAPISMGNALPLTNIPLGTTIHNVEVQVGKGGQLARAAGAVAELIAKEGRLTTLRLPSGEVRLISENCLATIGQVGNVKWKNRTLSKAGSKRWLGKRPEVRGVVMNAVDHPHGGGEGRAPIGRKKPLTPWGYSALGKKSRKRNKYSDVSILRRRK.

Polar residues predominate over residues 1–11; sequence MNTRSYSTFTP. Disordered stretches follow at residues 1–47 and 254–277; these read MNTR…RNNS and YSAL…RRRK.

Belongs to the universal ribosomal protein uL2 family. In terms of assembly, part of the 50S ribosomal subunit.

The protein resides in the plastid. Its subcellular location is the chloroplast. The sequence is that of Large ribosomal subunit protein uL2c (rpl2) from Cryptomeria japonica (Japanese cedar).